Consider the following 406-residue polypeptide: MYTPNDSMREEISLKVFVNHDWSKLCPDILRSILESLSSTDFHRAKTVCSDWYSNWKTCVKPLCPWRIMYVKDSLMLFKPGEDKIYKGTNVGLSNDSYYMASSGNWLLMVDSHLGFYIFNLLTSKRIDLPSMESSIRGGKVRFEQNHEHGFNWGHFVEPSRKVTVSKITITRESRAVLWIDERTGDFVVAWIFNYRYLFSYKKGDDSWWNWNNHWNMESLNLSFLDLAYRNSKLYIYITKSHIKVVDFSGNDPIEVIDKNPYWEHPFRYLTKKGEYINKRRIAIQKSGDVLIILSVLAQRSKEKVLFYIFKMNLASKIWERVESIGDDEMLIFGHGVTIRAPVQDVGDGIKSGSICFVSDVWPPYYSPAATNWGVFDLATSIIKWSKKDSFNNRYVQTYLFFPGFA.

The F-box domain occupies 20–67 (HDWSKLCPDILRSILESLSSTDFHRAKTVCSDWYSNWKTCVKPLCPWR).

In Arabidopsis thaliana (Mouse-ear cress), this protein is Putative F-box protein At5g38270.